Here is a 154-residue protein sequence, read N- to C-terminus: Ubiquitin-conjugating enzyme E2 L5 (154 aa).

Residues 2–149 (AASRRLMKEL…AEEFTKKYGE (148 aa)) enclose the UBC core domain. The Glycyl thioester intermediate role is filled by cysteine 86.

Belongs to the ubiquitin-conjugating enzyme family.

It catalyses the reaction S-ubiquitinyl-[E1 ubiquitin-activating enzyme]-L-cysteine + [E2 ubiquitin-conjugating enzyme]-L-cysteine = [E1 ubiquitin-activating enzyme]-L-cysteine + S-ubiquitinyl-[E2 ubiquitin-conjugating enzyme]-L-cysteine.. It participates in protein modification; protein ubiquitination. In terms of biological role, catalyzes the covalent attachment of ubiquitin to other proteins. This chain is Ubiquitin-conjugating enzyme E2 L5, found in Homo sapiens (Human).